Here is a 571-residue protein sequence, read N- to C-terminus: Proline--tRNA ligase (571 aa).

It belongs to the class-II aminoacyl-tRNA synthetase family. ProS type 1 subfamily. Homodimer.

The protein resides in the cytoplasm. The catalysed reaction is tRNA(Pro) + L-proline + ATP = L-prolyl-tRNA(Pro) + AMP + diphosphate. Functionally, catalyzes the attachment of proline to tRNA(Pro) in a two-step reaction: proline is first activated by ATP to form Pro-AMP and then transferred to the acceptor end of tRNA(Pro). As ProRS can inadvertently accommodate and process non-cognate amino acids such as alanine and cysteine, to avoid such errors it has two additional distinct editing activities against alanine. One activity is designated as 'pretransfer' editing and involves the tRNA(Pro)-independent hydrolysis of activated Ala-AMP. The other activity is designated 'posttransfer' editing and involves deacylation of mischarged Ala-tRNA(Pro). The misacylated Cys-tRNA(Pro) is not edited by ProRS. This chain is Proline--tRNA ligase, found in Buchnera aphidicola subsp. Schizaphis graminum (strain Sg).